The chain runs to 225 residues: Small ribosomal subunit protein uS7 (225 aa).

Serine 2 carries the post-translational modification N-acetylserine. Threonine 27 is modified (phosphothreonine). Residues lysine 45 and lysine 203 each participate in a glycyl lysine isopeptide (Lys-Gly) (interchain with G-Cter in ubiquitin) cross-link.

Belongs to the universal ribosomal protein uS7 family. In terms of assembly, component of the small ribosomal subunit (SSU). Mature yeast ribosomes consist of a small (40S) and a large (60S) subunit. The 40S small subunit contains 1 molecule of ribosomal RNA (18S rRNA) and 33 different proteins (encoded by 57 genes). The large 60S subunit contains 3 rRNA molecules (25S, 5.8S and 5S rRNA) and 46 different proteins (encoded by 81 genes). Post-translationally, N-terminally acetylated by acetyltransferase NatA.

The protein localises to the cytoplasm. Component of the ribosome, a large ribonucleoprotein complex responsible for the synthesis of proteins in the cell. The small ribosomal subunit (SSU) binds messenger RNAs (mRNAs) and translates the encoded message by selecting cognate aminoacyl-transfer RNA (tRNA) molecules. The large subunit (LSU) contains the ribosomal catalytic site termed the peptidyl transferase center (PTC), which catalyzes the formation of peptide bonds, thereby polymerizing the amino acids delivered by tRNAs into a polypeptide chain. The nascent polypeptides leave the ribosome through a tunnel in the LSU and interact with protein factors that function in enzymatic processing, targeting, and the membrane insertion of nascent chains at the exit of the ribosomal tunnel. This Saccharomyces cerevisiae (strain ATCC 204508 / S288c) (Baker's yeast) protein is Small ribosomal subunit protein uS7.